The following is a 159-amino-acid chain: ATP synthase subunit b (159 aa).

A helical transmembrane segment spans residues 2–22 (NISIPQIIAAILNFIILLLIV).

It belongs to the ATPase B chain family. As to quaternary structure, F-type ATPases have 2 components, F(1) - the catalytic core - and F(0) - the membrane proton channel. F(1) has five subunits: alpha(3), beta(3), gamma(1), delta(1), epsilon(1). F(0) has three main subunits: a(1), b(2) and c(10-14). The alpha and beta chains form an alternating ring which encloses part of the gamma chain. F(1) is attached to F(0) by a central stalk formed by the gamma and epsilon chains, while a peripheral stalk is formed by the delta and b chains.

It localises to the cell membrane. Functionally, f(1)F(0) ATP synthase produces ATP from ADP in the presence of a proton or sodium gradient. F-type ATPases consist of two structural domains, F(1) containing the extramembraneous catalytic core and F(0) containing the membrane proton channel, linked together by a central stalk and a peripheral stalk. During catalysis, ATP synthesis in the catalytic domain of F(1) is coupled via a rotary mechanism of the central stalk subunits to proton translocation. In terms of biological role, component of the F(0) channel, it forms part of the peripheral stalk, linking F(1) to F(0). In Clostridium botulinum (strain ATCC 19397 / Type A), this protein is ATP synthase subunit b.